The primary structure comprises 174 residues: Ribosome rescue factor SmrB (174 aa).

Positions 96-171 (LDLHGMNQQQ…GDSAILVLLD (76 aa)) constitute a Smr domain.

It belongs to the SmrB family. As to quaternary structure, associates with collided ribosomes, but not with correctly translating polysomes.

Acts as a ribosome collision sensor. Detects stalled/collided disomes (pairs of ribosomes where the leading ribosome is stalled and a second ribosome has collided with it) and endonucleolytically cleaves mRNA at the 5' boundary of the stalled ribosome. Stalled/collided disomes form a new interface (primarily via the 30S subunits) that binds SmrB. Cleaved mRNA becomes available for tmRNA ligation, leading to ribosomal subunit dissociation and rescue of stalled ribosomes. The sequence is that of Ribosome rescue factor SmrB from Aeromonas hydrophila subsp. hydrophila (strain ATCC 7966 / DSM 30187 / BCRC 13018 / CCUG 14551 / JCM 1027 / KCTC 2358 / NCIMB 9240 / NCTC 8049).